We begin with the raw amino-acid sequence, 289 residues long: Phytoene synthase (289 aa).

This sequence belongs to the phytoene/squalene synthase family. It depends on ATP as a cofactor. Mn(2+) serves as cofactor. Mg(2+) is required as a cofactor.

The protein operates within carotenoid biosynthesis; phytoene biosynthesis. Involved in the biosynthesis of carotenoids. Catalyzes the condensation of two molecules of geranylgeranyl diphosphate (GGPP) to give prephytoene diphosphate (PPPP) and the subsequent rearrangement of the cyclopropylcarbinyl intermediate to yield phytoene. In Thermus thermophilus (strain ATCC BAA-163 / DSM 7039 / HB27), this protein is Phytoene synthase (crtB).